We begin with the raw amino-acid sequence, 285 residues long: Chemotaxis protein LafT (285 aa).

4 helical membrane-spanning segments follow: residues 4–23 (FLGV…WAGG), 34–51 (FLII…GNPP), 171–191 (ALPG…MQAI), and 201–222 (HVAA…GLDP). The Cytoplasmic segment spans residues 223–285 (LSNAMAQRVK…MEKWLAEQEG (63 aa)).

The protein belongs to the MotA family.

The protein localises to the cell inner membrane. Its function is as follows. Required for rotation of the flagellar motor. Probable transmembrane proton channel. This is Chemotaxis protein LafT (lafT) from Vibrio parahaemolyticus serotype O3:K6 (strain RIMD 2210633).